We begin with the raw amino-acid sequence, 427 residues long: Glutamate-1-semialdehyde 2,1-aminomutase (427 aa).

Position 265 is an N6-(pyridoxal phosphate)lysine (lysine 265).

It belongs to the class-III pyridoxal-phosphate-dependent aminotransferase family. HemL subfamily. In terms of assembly, homodimer. Requires pyridoxal 5'-phosphate as cofactor.

Its subcellular location is the cytoplasm. The catalysed reaction is (S)-4-amino-5-oxopentanoate = 5-aminolevulinate. Its pathway is porphyrin-containing compound metabolism; protoporphyrin-IX biosynthesis; 5-aminolevulinate from L-glutamyl-tRNA(Glu): step 2/2. This Shewanella amazonensis (strain ATCC BAA-1098 / SB2B) protein is Glutamate-1-semialdehyde 2,1-aminomutase.